We begin with the raw amino-acid sequence, 312 residues long: Pantothenate kinase (312 aa).

Residue 97 to 104 (GSVAVGKS) coordinates ATP.

The protein belongs to the prokaryotic pantothenate kinase family.

The protein resides in the cytoplasm. The catalysed reaction is (R)-pantothenate + ATP = (R)-4'-phosphopantothenate + ADP + H(+). It participates in cofactor biosynthesis; coenzyme A biosynthesis; CoA from (R)-pantothenate: step 1/5. This Mycolicibacterium gilvum (strain PYR-GCK) (Mycobacterium gilvum (strain PYR-GCK)) protein is Pantothenate kinase.